Here is a 230-residue protein sequence, read N- to C-terminus: MDNQLTTELKERYGIVFHDVNLLEQAFTHSSYVNEHRYLKLSDNERLEFLGDAVLELIVSQYLYLKFPELPEGKLTKMRAAIVREDSLAKFAKECHFDNYILLGKGEEASGGRTRASLLCDLFEAFLGALYLDQKVGAAKKFIEDVIFPKIDAGAFSHEMDHKTQLQEVLQRKGDVSIEYRLIKEEGPAHDRTFFTEVYMNGELIGLGQGKSKKLAEQDAAERALKSIPQ.

An RNase III domain is found at 6–135; it reads TTELKERYGI…FLGALYLDQK (130 aa). Glu-48 lines the Mg(2+) pocket. Asp-52 is an active-site residue. 2 residues coordinate Mg(2+): Asp-121 and Glu-124. Residue Glu-124 is part of the active site. A DRBM domain is found at 161 to 230; that stretch reads DHKTQLQEVL…AERALKSIPQ (70 aa).

This sequence belongs to the ribonuclease III family. As to quaternary structure, homodimer. It depends on Mg(2+) as a cofactor.

Its subcellular location is the cytoplasm. The enzyme catalyses Endonucleolytic cleavage to 5'-phosphomonoester.. Its function is as follows. Digests double-stranded RNA. Involved in the processing of primary rRNA transcript to yield the immediate precursors to the large and small rRNAs (23S and 16S). Processes some mRNAs, and tRNAs when they are encoded in the rRNA operon. Processes pre-crRNA and tracrRNA of type II CRISPR loci if present in the organism. This Enterococcus faecalis (strain ATCC 700802 / V583) protein is Ribonuclease 3.